Reading from the N-terminus, the 442-residue chain is Glutamyl-tRNA(Gln) amidotransferase subunit D (442 aa).

Positions 63–84 (TQTDIGSSAGAGADTEADKTES) are disordered. The Asparaginase/glutaminase domain maps to 102–429 (PTVSLISTGG…PDPTNAMRKS (328 aa)). Catalysis depends on residues T112, T188, D189, and K265.

Belongs to the asparaginase 1 family. GatD subfamily. In terms of assembly, heterodimer of GatD and GatE.

The enzyme catalyses L-glutamyl-tRNA(Gln) + L-glutamine + ATP + H2O = L-glutaminyl-tRNA(Gln) + L-glutamate + ADP + phosphate + H(+). In terms of biological role, allows the formation of correctly charged Gln-tRNA(Gln) through the transamidation of misacylated Glu-tRNA(Gln) in organisms which lack glutaminyl-tRNA synthetase. The reaction takes place in the presence of glutamine and ATP through an activated gamma-phospho-Glu-tRNA(Gln). The GatDE system is specific for glutamate and does not act on aspartate. This is Glutamyl-tRNA(Gln) amidotransferase subunit D from Haloquadratum walsbyi (strain DSM 16790 / HBSQ001).